The sequence spans 291 residues: Porphobilinogen deaminase (291 aa).

Cysteine 237 bears the S-(dipyrrolylmethanemethyl)cysteine mark.

The protein belongs to the HMBS family. As to quaternary structure, monomer. The cofactor is dipyrromethane.

It catalyses the reaction 4 porphobilinogen + H2O = hydroxymethylbilane + 4 NH4(+). Its pathway is porphyrin-containing compound metabolism; protoporphyrin-IX biosynthesis; coproporphyrinogen-III from 5-aminolevulinate: step 2/4. Functionally, tetrapolymerization of the monopyrrole PBG into the hydroxymethylbilane pre-uroporphyrinogen in several discrete steps. This Clostridium perfringens (strain SM101 / Type A) protein is Porphobilinogen deaminase.